A 328-amino-acid polypeptide reads, in one-letter code: Alpha-tubulin N-acetyltransferase 2 (328 aa).

An N-acetyltransferase domain is found at 5–185; sequence SQVALLPKLS…NNFVVFHRYF (181 aa). Acetyl-CoA-binding positions include 119–132 and 155–164; these read FFVD…GFGK and SVKFLAFLRK. Disordered regions lie at residues 219 to 261 and 282 to 328; these read EYQS…PGKK and GGDP…TPEH. Pro residues predominate over residues 238-248; sequence TPPPPLPPPLV. The span at 312–328 shows a compositional bias: polar residues; it reads PTRSGVQYNIISGTPEH.

The protein belongs to the acetyltransferase ATAT1 family.

It catalyses the reaction L-lysyl-[alpha-tubulin] + acetyl-CoA = N(6)-acetyl-L-lysyl-[alpha-tubulin] + CoA + H(+). Specifically acetylates 'Lys-40' in alpha-tubulin on the lumenal side of microtubules. Promotes microtubule destabilization and accelerates microtubule dynamics; this activity may be independent of acetylation activity. Acetylates alpha-tubulin with a slow enzymatic rate, due to a catalytic site that is not optimized for acetyl transfer. Enters the microtubule through each end and diffuses quickly throughout the lumen of microtubules. Acetylates only long/old microtubules because of its slow acetylation rate since it does not have time to act on dynamically unstable microtubules before the enzyme is released. This Trypanosoma cruzi (strain CL Brener) protein is Alpha-tubulin N-acetyltransferase 2.